The following is a 171-amino-acid chain: 16S rRNA aminocarboxypropyltransferase (171 aa).

Residues Thr-18, Leu-68, Leu-91, and Ser-110 each contribute to the S-adenosyl-L-methionine site.

Belongs to the TDD superfamily. TSR3 family.

The protein localises to the cytoplasm. The catalysed reaction is an N(1)-methylpseudouridine in rRNA + S-adenosyl-L-methionine = N(1)-methyl-N(3)-[(3S)-3-amino-3-carboxypropyl]pseudouridine in rRNA + S-methyl-5'-thioadenosine + H(+). Aminocarboxypropyltransferase that catalyzes the aminocarboxypropyl transfer on pseudouridine corresponding to position 914 in M.jannaschii 16S rRNA. It constitutes the last step in biosynthesis of the hypermodified N1-methyl-N3-(3-amino-3-carboxypropyl) pseudouridine (m1acp3-Psi). This is 16S rRNA aminocarboxypropyltransferase from Methanosphaera stadtmanae (strain ATCC 43021 / DSM 3091 / JCM 11832 / MCB-3).